The sequence spans 197 residues: Protein GrpE (197 aa).

Residues Met-1–Arg-40 are disordered.

It belongs to the GrpE family. In terms of assembly, homodimer.

It is found in the cytoplasm. In terms of biological role, participates actively in the response to hyperosmotic and heat shock by preventing the aggregation of stress-denatured proteins, in association with DnaK and GrpE. It is the nucleotide exchange factor for DnaK and may function as a thermosensor. Unfolded proteins bind initially to DnaJ; upon interaction with the DnaJ-bound protein, DnaK hydrolyzes its bound ATP, resulting in the formation of a stable complex. GrpE releases ADP from DnaK; ATP binding to DnaK triggers the release of the substrate protein, thus completing the reaction cycle. Several rounds of ATP-dependent interactions between DnaJ, DnaK and GrpE are required for fully efficient folding. The sequence is that of Protein GrpE from Escherichia coli (strain K12 / DH10B).